Consider the following 1049-residue polypeptide: Self-sufficient cytochrome P450 monooxygenase CYP505E4 (1049 aa).

Cysteine 405 is a heme binding site. Residues 462 to 492 form a disordered region; it reads ATALSQHNMSAGATSSPGSSAHPAGNKNAQD. The segment covering 471 to 486 has biased composition (low complexity); that stretch reads SAGATSSPGSSAHPAG. The 142-residue stretch at 499–640 folds into the Flavodoxin-like domain; that stretch reads ISFFYGSNSG…DLEVWEETNL (142 aa). FMN-binding positions include 505-509 and 584-616; these read SNSGT and VFGC…TRLT. In terms of domain architecture, FAD-binding FR-type spans 678–906; it reads RDLIEGKVTA…RPAKEAFHLP (229 aa).

It in the N-terminal section; belongs to the cytochrome P450 family. FAD is required as a cofactor. The cofactor is FMN. It depends on heme as a cofactor.

It catalyses the reaction 2 oxidized [cytochrome P450] + NADPH = 2 reduced [cytochrome P450] + NADP(+) + H(+). It carries out the reaction an organic molecule + reduced [NADPH--hemoprotein reductase] + O2 = an alcohol + oxidized [NADPH--hemoprotein reductase] + H2O + H(+). The enzyme catalyses dodecanoate + reduced [NADPH--hemoprotein reductase] + O2 = 5-hydroxydodecanoate + oxidized [NADPH--hemoprotein reductase] + H2O + H(+). The catalysed reaction is tetradecanoate + reduced [NADPH--hemoprotein reductase] + O2 = 7-hydroxytetradecanoate + oxidized [NADPH--hemoprotein reductase] + H2O + H(+). It catalyses the reaction dodecan-1-ol + reduced [NADPH--hemoprotein reductase] + O2 = 1,5-dodecanediol + oxidized [NADPH--hemoprotein reductase] + H2O + H(+). It carries out the reaction dodecan-1-ol + reduced [NADPH--hemoprotein reductase] + O2 = 1,4-dodecanediol + oxidized [NADPH--hemoprotein reductase] + H2O + H(+). The enzyme catalyses dodecan-1-ol + reduced [NADPH--hemoprotein reductase] + O2 = 1,6-dodecanediol + oxidized [NADPH--hemoprotein reductase] + H2O + H(+). Functionally, self-sufficient cytochrome P450 monooxygenase that catalyzes the regioselective in-chain hydroxylation of alkanes, fatty alcohols, and fatty acids at the omega-7 position. Performs hydroxylation of C10-C16 n-alkanes and C12 and C14 fatty alcohols; and thereby enables the one step biocatalytic synthesis of rare alcohols such as 5-dodecanol and 7-tetradecanol. Converts 1-dodecanol into 1,5-dodecanediol as major product with very little sub-terminally hydroxylated products with the 1,4-dodecanediol and 1,6-dodecanediol more abundant. Converts dodecanoic acid to 5-hydroxydodecanoic acid which can be further converted into delta-dodecalactone by lactonization of the 5-hydroxy acid at low pH. Also gives sub-terminal hydroxylation of dodecanoic acid with 9-hydroxydodecanoic acid being the second most abundant product. The protein is Self-sufficient cytochrome P450 monooxygenase CYP505E4 of Penicillium freii.